The sequence spans 494 residues: MSSEEDYFDELEYDLADEVNEEKEDIQTKKLTTVNCQTEKFNPFEILPESIELFRTLALISPDRLSLSETAQILPKIVDLKRILQQQEIDFIKLLPFFNEIIPLIKSNIKLMHNFLISLYSRRFPELSSLIPSPLQYSKVISILENENYSKNESDELFFHLENKAKLTREQILVLTMSMKTSFKNKEPLDIKTRTQILEANSILENLWKLQEDIGQYIASKISIIAPNVCFLVGPEIAAQLIAHAGGVLEFSRIPSCNIASIGKNKHLSHELHTLESGVRQEGYLFASDMIQKFPVSVHKQMLRMLCAKVSLAARVDAGQKNGDRNTVLAHKWKAELSKKARKLSEAPSISETKALPIPEDQPKKKRAGRKFRKYKEKFRLSHVRQLQNRMEFGKQEQTVLDSYGEEVGLGMSNTSLQQAVGATSGSRRSAGNQAKLTKVMKHRISEANQQADEFLISLGHNTEQPNLSPEMVQMHKKQHTNPEEETNWFSGHG.

Coiled-coil stretches lie at residues Glu88–Arg122 and Ile191–Ile225. Residues Ile225–Glu346 enclose the Nop domain. Positions Leu344 to Arg370 are disordered.

Belongs to the PRP31 family. In terms of assembly, component of the U4/U6-U5 tri-snRNP complex composed of the U4, U6 and U5 snRNAs and at least PRP3, PRP4, PRP6, PRP8, PRP18, PRP31, PRP38, SNU13, SNU23, SNU66, SNU114, SPP381, SMB1, SMD1, SMD2, SMD3, SMX2, SMX3, LSM2, LSM3, LSM4, LSM5, LSM6, LSM7, LSM8, BRR2 and DIB1.

Its subcellular location is the nucleus. Its function is as follows. Promotes the association of the U4/U6.U5 tri-snRNP particle with pre-spliceosomes to form the mature spliceosomal complex. This Saccharomyces cerevisiae (strain ATCC 204508 / S288c) (Baker's yeast) protein is Pre-mRNA-processing factor 31 (PRP31).